The primary structure comprises 458 residues: N-acetylgalactosamine kinase (458 aa).

Residues Arg-43, Glu-49, His-50, and Asp-52 each coordinate alpha-D-galactose. Positions 143, 145, and 146 each coordinate ATP. Asp-190 is an alpha-D-galactose binding site. Asp-190 (proton acceptor) is an active-site residue. ATP-binding residues include Asn-233 and Lys-234.

Belongs to the GHMP kinase family. GalK subfamily. Monomer.

It catalyses the reaction N-acetyl-alpha-D-galactosamine + ATP = N-acetyl-alpha-D-galactosamine 1-phosphate + ADP + H(+). Functionally, acts on GalNAc. Also acts as a galactokinase when galactose is present at high concentrations. May be involved in a salvage pathway for the reutilization of free GalNAc derived from the degradation of complex carbohydrates. The protein is N-acetylgalactosamine kinase (GALK2) of Homo sapiens (Human).